The primary structure comprises 49 residues: Small, acid-soluble spore protein O (49 aa).

Residues 23–49 (AGYNEKFSNEPLTEAQRQNNKKRKKNQ) are disordered.

It belongs to the SspO family.

The protein localises to the spore core. This chain is Small, acid-soluble spore protein O, found in Geobacillus thermodenitrificans (strain NG80-2).